A 294-amino-acid chain; its full sequence is 4-hydroxy-tetrahydrodipicolinate synthase (294 aa).

A pyruvate-binding site is contributed by Thr-47. Residue Tyr-136 is the Proton donor/acceptor of the active site. The active-site Schiff-base intermediate with substrate is Lys-164. Val-206 contributes to the pyruvate binding site.

This sequence belongs to the DapA family. Homotetramer; dimer of dimers.

Its subcellular location is the cytoplasm. The catalysed reaction is L-aspartate 4-semialdehyde + pyruvate = (2S,4S)-4-hydroxy-2,3,4,5-tetrahydrodipicolinate + H2O + H(+). The protein operates within amino-acid biosynthesis; L-lysine biosynthesis via DAP pathway; (S)-tetrahydrodipicolinate from L-aspartate: step 3/4. Functionally, catalyzes the condensation of (S)-aspartate-beta-semialdehyde [(S)-ASA] and pyruvate to 4-hydroxy-tetrahydrodipicolinate (HTPA). The sequence is that of 4-hydroxy-tetrahydrodipicolinate synthase from Cyanothece sp. (strain PCC 7425 / ATCC 29141).